The following is a 528-amino-acid chain: Phenylalanine--tRNA ligase alpha subunit (528 aa).

Thr365 and Phe444 together coordinate L-phenylalanine. Mg(2+) is bound at residue Glu446. Phe469 is an L-phenylalanine binding site.

It belongs to the class-II aminoacyl-tRNA synthetase family. Phe-tRNA synthetase alpha subunit type 2 subfamily. In terms of assembly, tetramer of two alpha and two beta subunits. Mg(2+) serves as cofactor.

The protein localises to the cytoplasm. It carries out the reaction tRNA(Phe) + L-phenylalanine + ATP = L-phenylalanyl-tRNA(Phe) + AMP + diphosphate + H(+). This Borreliella burgdorferi (strain ATCC 35210 / DSM 4680 / CIP 102532 / B31) (Borrelia burgdorferi) protein is Phenylalanine--tRNA ligase alpha subunit.